The following is a 260-amino-acid chain: Malonyl-[acyl-carrier protein] O-methyltransferase (260 aa).

This sequence belongs to the methyltransferase superfamily.

It catalyses the reaction malonyl-[ACP] + S-adenosyl-L-methionine = malonyl-[ACP] methyl ester + S-adenosyl-L-homocysteine. It functions in the pathway cofactor biosynthesis; biotin biosynthesis. Converts the free carboxyl group of a malonyl-thioester to its methyl ester by transfer of a methyl group from S-adenosyl-L-methionine (SAM). It allows to synthesize pimeloyl-ACP via the fatty acid synthetic pathway. The polypeptide is Malonyl-[acyl-carrier protein] O-methyltransferase (Chlorobium phaeovibrioides (strain DSM 265 / 1930) (Prosthecochloris vibrioformis (strain DSM 265))).